The primary structure comprises 91 residues: Probable Fe(2+)-trafficking protein (91 aa).

This sequence belongs to the Fe(2+)-trafficking protein family.

In terms of biological role, could be a mediator in iron transactions between iron acquisition and iron-requiring processes, such as synthesis and/or repair of Fe-S clusters in biosynthetic enzymes. The sequence is that of Probable Fe(2+)-trafficking protein from Cupriavidus metallidurans (strain ATCC 43123 / DSM 2839 / NBRC 102507 / CH34) (Ralstonia metallidurans).